We begin with the raw amino-acid sequence, 122 residues long: Small ribosomal subunit protein uS13 (122 aa).

The tract at residues 92 to 122 is disordered; it reads HRKQLPVRGQRTHTNARTRKGKAKPIAGKKK.

This sequence belongs to the universal ribosomal protein uS13 family. Part of the 30S ribosomal subunit. Forms a loose heterodimer with protein S19. Forms two bridges to the 50S subunit in the 70S ribosome.

Functionally, located at the top of the head of the 30S subunit, it contacts several helices of the 16S rRNA. In the 70S ribosome it contacts the 23S rRNA (bridge B1a) and protein L5 of the 50S subunit (bridge B1b), connecting the 2 subunits; these bridges are implicated in subunit movement. Contacts the tRNAs in the A and P-sites. The polypeptide is Small ribosomal subunit protein uS13 (Methylobacterium radiotolerans (strain ATCC 27329 / DSM 1819 / JCM 2831 / NBRC 15690 / NCIMB 10815 / 0-1)).